Here is a 265-residue protein sequence, read N- to C-terminus: Glycosylphosphatidylinositol anchor biosynthesis protein 11 (265 aa).

The next 2 membrane-spanning stretches (helical) occupy residues 49–69 (LLVV…SGLT) and 79–99 (GFLT…INLL). Residues Asn111 and Asn112 are each glycosylated (N-linked (GlcNAc...) asparagine). A run of 4 helical transmembrane segments spans residues 137-157 (IFVS…MGAP), 166-186 (LYLS…LSNL), 209-229 (ILSS…PIPL), and 240-260 (ITLL…SLIV).

The protein belongs to the PIGF family.

The protein localises to the endoplasmic reticulum membrane. It participates in glycolipid biosynthesis; glycosylphosphatidylinositol-anchor biosynthesis. Its function is as follows. Acts in the GPI biosynthetic pathway between GlcNAc-PI synthesis and GPI transfer to protein. This Candida albicans (strain SC5314 / ATCC MYA-2876) (Yeast) protein is Glycosylphosphatidylinositol anchor biosynthesis protein 11 (GPI11).